Here is a 384-residue protein sequence, read N- to C-terminus: N-acetyldiaminopimelate deacetylase (384 aa).

The active site involves Asp74. The Proton acceptor role is filled by Glu133.

The protein belongs to the peptidase M20A family. N-acetyldiaminopimelate deacetylase subfamily.

It catalyses the reaction N-acetyl-(2S,6S)-2,6-diaminopimelate + H2O = (2S,6S)-2,6-diaminopimelate + acetate. It functions in the pathway amino-acid biosynthesis; L-lysine biosynthesis via DAP pathway; LL-2,6-diaminopimelate from (S)-tetrahydrodipicolinate (acetylase route): step 3/3. Its function is as follows. Catalyzes the conversion of N-acetyl-diaminopimelate to diaminopimelate and acetate. In Pediococcus pentosaceus (strain ATCC 25745 / CCUG 21536 / LMG 10740 / 183-1w), this protein is N-acetyldiaminopimelate deacetylase.